We begin with the raw amino-acid sequence, 1998 residues long: Histone acetyltransferase KAT6A (1998 aa).

An SAMD1-like winged helix (WH) domain is found at 1-77; it reads MVKLANPLYT…LNSYKDPDNP (77 aa). Residues 1–144 form a required for activation of RUNX1-1 region; sequence MVKLANPLYT…CGGTAASGFH (144 aa). Residues 52 to 166 form a required for nuclear localization region; that stretch reads ELSVKDGTIL…HGRLLKDGPL (115 aa). Residues 72-93 are disordered; sequence KDPDNPGRIALPKPRNHGKLDN. The H15 domain occupies 95–171; it reads QSVDWNKLLK…KDGPLYRLNT (77 aa). The tract at residues 144–662 is interaction with PML; sequence HQQLRLAIKR…RKGYGRFLID (519 aa). At Lys-172 the chain carries N6-acetyllysine. PHD-type zinc fingers lie at residues 199-258 and 255-306; these read DKPV…LRWQ and LRWQ…GMWI. The interaction with RUNX1-1 stretch occupies residues 312–662; that stretch reads PRKKGRKLLQ…RKGYGRFLID (351 aa). Positions 336-377 are disordered; that stretch reads GRPKNRLKKQSTVSKGPFSKVRTGPGRGRKRKITVSSQSASS. Lys-350 and Lys-355 each carry N6-acetyllysine. Position 369 is a phosphothreonine; by PKB/AKT1 (Thr-369). Position 419 is a phosphoserine (Ser-419). Residues 440-464 form a disordered region; that stretch reads KGNRKSSTSHWPTDNQDGWESKQES. Residues 444–457 are compositionally biased toward polar residues; sequence KSSTSHWPTDNQDG. At Ser-471 the chain carries Phosphoserine. The segment at 486–776 is catalytic; it reads IQEQALQKVG…VDPECLRWTP (291 aa). The 275-residue stretch at 502–776 folds into the MYST-type HAT domain; sequence PQVRCPSVIE…VDPECLRWTP (275 aa). The interval 505–808 is mediates interaction with BRPF1, required for histone H3 acetyltransferase activity; sequence RCPSVIEFGK…EPQGQERELE (304 aa). A C2HC MYST-type zinc finger spans residues 535-560; the sequence is LYLCEFCLKYMKSRTILQQHMKKCGW. Lys-602 carries the post-translational modification N6-acetyllysine; by autocatalysis. Residues 643-647 and 652-658 each bind acetyl-CoA; these read SCIMI and QRKGYGR. Catalysis depends on Glu-678, which acts as the Proton donor/acceptor. Ser-682 lines the acetyl-CoA pocket. The disordered stretch occupies residues 783-947; that stretch reads VVSEEEDEEA…RFSESADLWR (165 aa). The residue at position 785 (Ser-785) is a Phosphoserine. A compositionally biased stretch (acidic residues) spans 785 to 797; it reads SEEEDEEADDGEK. Positions 798 to 840 are enriched in basic and acidic residues; that stretch reads EEPQGQERELETRERVGKSVSRENKDQDSSSLIESEKKPEVKE. Lys-815 is subject to N6-acetyllysine. Lys-835 is covalently cross-linked (Glycyl lysine isopeptide (Lys-Gly) (interchain with G-Cter in SUMO2)). The segment covering 865 to 874 has biased composition (basic residues); the sequence is RRGRCGRKNR. Over residues 875-886 the composition is skewed to basic and acidic residues; the sequence is KTQERFGDKDSK. Tyr-900 is modified (phosphotyrosine). The span at 903-916 shows a compositional bias: basic and acidic residues; it reads CEEKSAASRERYTE. Residues Ser-940 and Ser-953 each carry the phosphoserine modification. A disordered region spans residues 982–1079; that stretch reads GFSESSEEEE…EEEEDENELF (98 aa). Lys-1006 is modified (N6-acetyllysine). The span at 1008-1029 shows a compositional bias: basic residues; it reads TLKRKKPILHRRRRVRKRKHHN. Low complexity predominate over residues 1030–1041; it reads SSVVTETISETT. 2 stretches are compositionally biased toward acidic residues: residues 1042–1052 and 1064–1077; these read EVLDEPFEDSD and FEIE…DENE. Residues Ser-1088, Ser-1089, and Ser-1114 each carry the phosphoserine modification. 4 disordered regions span residues 1096–1175, 1195–1436, 1450–1567, and 1630–1702; these read QASS…PGFK, PIKP…EGAY, QSYT…STMG, and TCVV…CSMN. Positions 1106–1119 are enriched in acidic residues; the sequence is DEEEEEEESDDADD. Over residues 1135 to 1146 the composition is skewed to polar residues; sequence NSASLEPDTSTP. A compositionally biased stretch (basic residues) spans 1147-1173; that stretch reads MKKKKGWPKGKSRKPIHWKKRPGRKPG. Basic and acidic residues predominate over residues 1203-1228; that stretch reads RTQESEELVEVKEGLVEERKEEMHTE. Composition is skewed to acidic residues over residues 1229-1240 and 1281-1298; these read ADEEAEEEEDAA and EEPQ…DEVT. Composition is skewed to basic and acidic residues over residues 1316-1333, 1351-1360, and 1392-1413; these read HLDS…ARED, DSRENAKDKD, and DSNT…HSEL. The span at 1472-1496 shows a compositional bias: low complexity; sequence HNSPISSIPSHPSQSVRSVSSPSMP. Polar residues predominate over residues 1501–1522; sequence GYTQISPEQGSLSAPSMQNMET. Positions 1510 to 1635 are interaction with RUNX1-2; it reads GSLSAPSMQN…KSPQTCVVER (126 aa). An interaction with PML region spans residues 1510–1735; the sequence is GSLSAPSMQN…YERIPGDFGA (226 aa). Residues 1527-1541 are compositionally biased toward low complexity; that stretch reads DVPSVSDHSQQVVDS. The segment covering 1549-1567 has biased composition (polar residues); the sequence is IESTTENYENPSSYDSTMG. Composition is skewed to pro residues over residues 1639–1658 and 1665–1693; these read NQQP…PQPQ and PQPP…PQQQ. The interval 1907–1942 is required for activation of RUNX1-2; the sequence is SMNMNTLNAMNSYRMTQPMMNSSYHSNPAYMNQTAQ.

The protein belongs to the MYST (SAS/MOZ) family. In terms of assembly, component of the MOZ/MORF complex composed at least of ING5, KAT6A, KAT6B, MEAF6 and one of BRPF1, BRD1/BRPF2 and BRPF3. Interacts with RUNX1; phosphorylation of RUNX1 enhances the interaction. Interacts with RUNX2. Interacts with p53/TP53. Interacts with PML and this interaction positively regulates its acetylation activity towards p53/TP53. Post-translationally, autoacetylated. Autoacetylation at Lys-602 is required for proper function. In terms of processing, phosphorylation at Thr-369 by PKB/AKT1 inhibits its interaction with PML and negatively regulates its acetylation activity towards p53/TP53.

It localises to the nucleus. It is found in the nucleolus. Its subcellular location is the nucleoplasm. The protein localises to the PML body. The catalysed reaction is L-lysyl-[protein] + acetyl-CoA = N(6)-acetyl-L-lysyl-[protein] + CoA + H(+). Functionally, histone acetyltransferase that acetylates lysine residues in histone H3 and histone H4 (in vitro). Component of the MOZ/MORF complex which has a histone H3 acetyltransferase activity. May act as a transcriptional coactivator for RUNX1 and RUNX2. Acetylates p53/TP53 at 'Lys-120' and 'Lys-382' and controls its transcriptional activity via association with PML. This Rattus norvegicus (Rat) protein is Histone acetyltransferase KAT6A (Kat6a).